The following is a 430-amino-acid chain: Aspartate aminotransferase, mitochondrial (430 aa).

The transit peptide at 1-29 directs the protein to the mitochondrion; it reads MALLHSGRVLSGVASAFHPGLAAAASARA. Threonine 48 carries the phosphothreonine modification. The residue at position 59 (lysine 59) is an N6-acetyllysine. Residue glycine 65 participates in substrate binding. Lysine 73 is subject to N6-acetyllysine; alternate. The residue at position 73 (lysine 73) is an N6-succinyllysine; alternate. An N6-acetyllysine modification is found at lysine 82. Position 90 is an N6-acetyllysine; alternate (lysine 90). Lysine 90 bears the N6-succinyllysine; alternate mark. Tyrosine 96 bears the 3'-nitrotyrosine; alternate mark. Tyrosine 96 carries the phosphotyrosine; alternate modification. N6-acetyllysine; alternate is present on residues lysine 107, lysine 122, and lysine 159. 3 positions are modified to N6-succinyllysine; alternate: lysine 107, lysine 122, and lysine 159. A substrate-binding site is contributed by tryptophan 162. Lysine 185 is modified (N6-acetyllysine; alternate). The residue at position 185 (lysine 185) is an N6-succinyllysine; alternate. Asparagine 215 contributes to the substrate binding site. Residue lysine 227 is modified to N6-succinyllysine. Lysine 234 bears the N6-acetyllysine mark. Lysine 279 and lysine 296 each carry N6-acetyllysine; alternate. Lysine 279 bears the N6-(pyridoxal phosphate)lysine; alternate mark. The residue at position 296 (lysine 296) is an N6-succinyllysine; alternate. Lysine 302 carries the post-translational modification N6-acetyllysine. Lysine 309 carries the N6-acetyllysine; alternate modification. Lysine 309 carries the post-translational modification N6-succinyllysine; alternate. At arginine 313 the chain carries Asymmetric dimethylarginine. Lysine 345 carries the N6-acetyllysine modification. Lysine 363 carries the post-translational modification N6-acetyllysine; alternate. At lysine 363 the chain carries N6-succinyllysine; alternate. Lysine 364 and lysine 387 each carry N6-acetyllysine. Lysine 396 and lysine 404 each carry N6-acetyllysine; alternate. Lysine 396 and lysine 404 each carry N6-succinyllysine; alternate. Arginine 407 is a substrate binding site.

It belongs to the class-I pyridoxal-phosphate-dependent aminotransferase family. Homodimer. Requires pyridoxal 5'-phosphate as cofactor.

Its subcellular location is the mitochondrion matrix. The protein resides in the cell membrane. It carries out the reaction L-aspartate + 2-oxoglutarate = oxaloacetate + L-glutamate. The enzyme catalyses L-kynurenine + 2-oxoglutarate = kynurenate + L-glutamate + H2O. Catalyzes the irreversible transamination of the L-tryptophan metabolite L-kynurenine to form kynurenic acid (KA). As a member of the malate-aspartate shuttle, it has a key role in the intracellular NAD(H) redox balance. Is important for metabolite exchange between mitochondria and cytosol, and for amino acid metabolism. Facilitates cellular uptake of long-chain free fatty acids. This Sus scrofa (Pig) protein is Aspartate aminotransferase, mitochondrial (GOT2).